Consider the following 129-residue polypeptide: Phosphoribosyl-AMP cyclohydrolase (129 aa).

Asp-79 contacts Mg(2+). Cys-80 is a Zn(2+) binding site. 2 residues coordinate Mg(2+): Asp-81 and Asp-83. The Zn(2+) site is built by Cys-96 and Cys-103.

It belongs to the PRA-CH family. Homodimer. Requires Mg(2+) as cofactor. Zn(2+) serves as cofactor.

The protein localises to the cytoplasm. It catalyses the reaction 1-(5-phospho-beta-D-ribosyl)-5'-AMP + H2O = 1-(5-phospho-beta-D-ribosyl)-5-[(5-phospho-beta-D-ribosylamino)methylideneamino]imidazole-4-carboxamide. Its pathway is amino-acid biosynthesis; L-histidine biosynthesis; L-histidine from 5-phospho-alpha-D-ribose 1-diphosphate: step 3/9. Catalyzes the hydrolysis of the adenine ring of phosphoribosyl-AMP. The polypeptide is Phosphoribosyl-AMP cyclohydrolase (Magnetococcus marinus (strain ATCC BAA-1437 / JCM 17883 / MC-1)).